Consider the following 236-residue polypeptide: Phosphoribosylaminoimidazole-succinocarboxamide synthase (236 aa).

The protein belongs to the SAICAR synthetase family.

It catalyses the reaction 5-amino-1-(5-phospho-D-ribosyl)imidazole-4-carboxylate + L-aspartate + ATP = (2S)-2-[5-amino-1-(5-phospho-beta-D-ribosyl)imidazole-4-carboxamido]succinate + ADP + phosphate + 2 H(+). It participates in purine metabolism; IMP biosynthesis via de novo pathway; 5-amino-1-(5-phospho-D-ribosyl)imidazole-4-carboxamide from 5-amino-1-(5-phospho-D-ribosyl)imidazole-4-carboxylate: step 1/2. The sequence is that of Phosphoribosylaminoimidazole-succinocarboxamide synthase from Pseudomonas putida (strain ATCC 700007 / DSM 6899 / JCM 31910 / BCRC 17059 / LMG 24140 / F1).